The chain runs to 881 residues: Probable alpha/beta-glucosidase agdC (881 aa).

An N-terminal signal peptide occupies residues 1 to 14 (MLRSLLLLAPLVGA). Asn171, Asn293, and Asn373 each carry an N-linked (GlcNAc...) asparagine glycan. The active-site Nucleophile is Asp422. Glu425 is a catalytic residue. Residues 440-485 (YSRDNDLPPAAPPVRPSNPRPLPGFPGDFQPSSSSKRSTKGSKVGL) form a disordered region. Residues 448 to 463 (PAAPPVRPSNPRPLPG) are compositionally biased toward pro residues. Asn506 carries an N-linked (GlcNAc...) asparagine glycan. The active-site Proton donor is the Asp571. N-linked (GlcNAc...) asparagine glycans are attached at residues Asn572, Asn608, and Asn742.

The protein belongs to the glycosyl hydrolase 31 family.

Its subcellular location is the secreted. The enzyme catalyses Hydrolysis of terminal, non-reducing (1-&gt;4)-linked alpha-D-glucose residues with release of alpha-D-glucose.. It catalyses the reaction Hydrolysis of terminal, non-reducing beta-D-glucosyl residues with release of beta-D-glucose.. Glucosidase involved in the degradation of cellulosic biomass. Has both alpha- and beta-glucosidase activity. The polypeptide is Probable alpha/beta-glucosidase agdC (agdC) (Neosartorya fischeri (strain ATCC 1020 / DSM 3700 / CBS 544.65 / FGSC A1164 / JCM 1740 / NRRL 181 / WB 181) (Aspergillus fischerianus)).